Consider the following 88-residue polypeptide: Elongation factor 1-beta (88 aa).

This sequence belongs to the EF-1-beta/EF-1-delta family.

Promotes the exchange of GDP for GTP in EF-1-alpha/GDP, thus allowing the regeneration of EF-1-alpha/GTP that could then be used to form the ternary complex EF-1-alpha/GTP/AAtRNA. The sequence is that of Elongation factor 1-beta from Halorubrum lacusprofundi (strain ATCC 49239 / DSM 5036 / JCM 8891 / ACAM 34).